Reading from the N-terminus, the 500-residue chain is MQADEISSIIKERIDNFELDVNVAETGKVMAFADGVAKVYGLKNVMSYEMVEFDTGDRGLASNLEESSVGVVVLGAGKNIKEGTSVKRLGKLMKVPAGDALMGRVVNGMGEPVDGKGAIETTEYRFVEEKAPGIMQRKSVHEPLQTGLKAIDALVPIGRGQRELIIGDRQTGKTTVAIDTIINQKGQDVVCIYVAIGQKESTVAQVVRKLEEHGAMEYTIIVNAPASDSAAMQFLAPYTGVTMGEYFRDNARHALIIYDDLSKHAVAYREMSLILRRPPGREAFPGDVFYLHSRLLERAAKVSDELGAGSLTALPIIETQAGDVAAYIPTNVISITDGQIFLETDLFNSGVRPAINVGLSVSRVGGAAQIKATKQVAGTLRLDLAQYRELQAFAQFASDLDESSRKQLERGQRMVEILKQPPYAPLPIERQVVVIFAGAKGYMDDISVTKITKFEAELYPFIEAKYPQIFEDIRTKKMIDKETEETLSKALEEFKTVFVA.

167-174 contributes to the ATP binding site; that stretch reads GDRQTGKT.

Belongs to the ATPase alpha/beta chains family. In terms of assembly, F-type ATPases have 2 components, CF(1) - the catalytic core - and CF(0) - the membrane proton channel. CF(1) has five subunits: alpha(3), beta(3), gamma(1), delta(1), epsilon(1). CF(0) has three main subunits: a(1), b(2) and c(9-12). The alpha and beta chains form an alternating ring which encloses part of the gamma chain. CF(1) is attached to CF(0) by a central stalk formed by the gamma and epsilon chains, while a peripheral stalk is formed by the delta and b chains.

The protein localises to the cell inner membrane. It carries out the reaction ATP + H2O + 4 H(+)(in) = ADP + phosphate + 5 H(+)(out). In terms of biological role, produces ATP from ADP in the presence of a proton gradient across the membrane. The alpha chain is a regulatory subunit. In Wolinella succinogenes (strain ATCC 29543 / DSM 1740 / CCUG 13145 / JCM 31913 / LMG 7466 / NCTC 11488 / FDC 602W) (Vibrio succinogenes), this protein is ATP synthase subunit alpha.